Here is a 445-residue protein sequence, read N- to C-terminus: MAALEERELSQEQTEKLLQFQDLTGIESMDQCRQTLQQHNWNIEAAVQDRLNEQEGVPRVFNNPPNRPLQVNTADHRVYSYVVSRPQPRGLLGWGYYLIMLPFRITYYTLLDIFRFTLRFIRPDPRSRVTDPVGDVVSFIHLFEEKYGRIHPVFYQGTYSQALNDAKQELRFLLVYLHGEDHQDSDDFCRNTLCTPEVTHFINSRMLFWACSTNKPEGFRVSQALRENTYPFLGMIMLKDRRMTVVGRLEGLMQPQDLINQLTFIIEANQTYLVSERLEREERNETQVLRQQQDEAYLVSLRADQEKERKKKEKQEQKRREEEEAQRKQMLEERKKRNLEEEKERKSECLPAEPVPDHPDNVKIIFKMPNGTRVERRFLFTQSLSVIHDFLFSLKETPEKFQIVTSFPRRVLPCLPSEEIPVPPTLQEAGLSQSQLLFVQDLTDD.

One can recognise a UBA domain in the interval 12-53; that stretch reads EQTEKLLQFQDLTGIESMDQCRQTLQQHNWNIEAAVQDRLNE. A coiled-coil region spans residues 275–353; that stretch reads SERLEREERN…ERKSECLPAE (79 aa). The segment at 302-354 is disordered; sequence RADQEKERKKKEKQEQKRREEEEAQRKQMLEERKKRNLEEEKERKSECLPAEP. The span at 303-348 shows a compositional bias: basic and acidic residues; it reads ADQEKERKKKEKQEQKRREEEEAQRKQMLEERKKRNLEEEKERKSE. Positions 357–439 constitute a UBX domain; sequence DHPDNVKIIF…GLSQSQLLFV (83 aa).

Its subcellular location is the cytoplasm. The protein resides in the lipid droplet. The protein localises to the endoplasmic reticulum. Functionally, plays an important role in endoplasmic reticulum-associated degradation (ERAD) that mediates ubiquitin-dependent degradation of misfolded endoplasmic reticulum proteins. Involved in inhibition of lipid droplet degradation. Involved in stress granule disassembly. The polypeptide is FAS-associated factor 2-A (faf2-a) (Xenopus laevis (African clawed frog)).